A 326-amino-acid chain; its full sequence is MTHSCRLSVAPMLDWTDRHCRYFHRLMTKETLLYTEMITTGAIIHGKGDFLAYNQEEHPVALQLGGSNPQDLATCAKLAAERGYDEVNLNVGCPSDRVQNGRFGACLMAEPQLVADCVAAMKEVVDIPVTVKTRIGIDDQDSYEFLTDFVSIVSEKGGCEQFTIHARKAWLSGLSPKENREIPPLDYPRAYQLKKDFSHLTIAINGGVKSLEEAKEHLQHLDGVMIGREAYQSPYLLASVDQELFGSQSPIKKRRQIVEEMYPYIEQQLANGAYLGHMTRHMLGLFQNMPGARQWRRHISENAHKPGSGIEVLQQALAKIPQELDV.

FMN is bound by residues 11–13 and Q63; that span reads PML. The active-site Proton donor is the C93. FMN-binding positions include K132, H165, 205 to 207, and 227 to 228; these read NGG and GR.

This sequence belongs to the Dus family. DusA subfamily. FMN is required as a cofactor.

The enzyme catalyses 5,6-dihydrouridine(20) in tRNA + NADP(+) = uridine(20) in tRNA + NADPH + H(+). The catalysed reaction is 5,6-dihydrouridine(20) in tRNA + NAD(+) = uridine(20) in tRNA + NADH + H(+). It carries out the reaction 5,6-dihydrouridine(20a) in tRNA + NADP(+) = uridine(20a) in tRNA + NADPH + H(+). It catalyses the reaction 5,6-dihydrouridine(20a) in tRNA + NAD(+) = uridine(20a) in tRNA + NADH + H(+). Catalyzes the synthesis of 5,6-dihydrouridine (D), a modified base found in the D-loop of most tRNAs, via the reduction of the C5-C6 double bond in target uridines. Specifically modifies U20 and U20a in tRNAs. In Vibrio vulnificus (strain CMCP6), this protein is tRNA-dihydrouridine(20/20a) synthase.